A 1685-amino-acid polypeptide reads, in one-letter code: Phosphatidylinositol 4-phosphate 3-kinase C2 domain-containing subunit alpha (1685 aa).

Disordered stretches follow at residues 1-33 and 41-60; these read MAQI…EALQ and KLQK…LSSS. An N-acetylalanine modification is found at Ala-2. The interaction with clathrin; sufficient to induce clathrin assembly stretch occupies residues 2 to 142; it reads AQISSNSGFK…FRPTIQRGQW (141 aa). Residues 19-31 show a composition bias toward basic and acidic residues; the sequence is EPTRAKDVDKEEA. Residues 49 to 60 show a composition bias toward polar residues; that stretch reads TDNQRGFELSSS. Ser-60, Ser-108, Ser-259, Ser-327, and Ser-338 each carry phosphoserine. Residues 419 to 507 form the PI3K-RBD domain; that stretch reads NASVKVSIDI…DTEIRLQLLT (89 aa). Ser-628 bears the Phosphoserine mark. A C2 PI3K-type domain is found at 680–839; the sequence is TTEQLQFTIF…ERIVLQVDFP (160 aa). A PIK helical domain is found at 859-1035; sequence QHNLETLEND…EHVLGALLSV (177 aa). The 279-residue stretch at 1103-1381 folds into the PI3K/PI4K catalytic domain; it reads SIKSCSFFSS…LIESSLGSIA (279 aa). Residues 1109–1115 form a G-loop region; it reads FFSSNAV. Residues 1245 to 1253 are catalytic loop; it reads GICDRHNDN. The segment at 1264-1290 is activation loop; it reads HIDFGKFLGHAQMFGTFKRDRAPFVLT. One can recognise a PX domain in the interval 1420–1536; that stretch reads GRIKEVSVFT…TFFHPLLRDE (117 aa). The tract at residues 1486–1491 is interaction with PtdIns(4,5)P2-containing membranes; that stretch reads RMVLGR. Ser-1551 is subject to Phosphoserine. The region spanning 1554–1677 is the C2 domain; sequence TPGQIGGAVK…NLSKETVKWY (124 aa). The Nuclear localization signal motif lies at 1607–1618; it reads SKRKTKISRKTR.

This sequence belongs to the PI3/PI4-kinase family. As to quaternary structure, part of a complex with ERBB2 and EGFR. Interacts with clathrin trimers. Interacts with SBF2/MTMR13. The cofactor is Ca(2+). It depends on Mg(2+) as a cofactor. In terms of processing, phosphorylated on Ser-259 during mitosis and upon UV irradiation; which does not change enzymatic activity but leads to proteasomal degradation. Phosphorylated upon insulin stimulation; which may lead to enzyme activation.

It localises to the cell membrane. It is found in the cytoplasmic vesicle. Its subcellular location is the clathrin-coated vesicle. The protein localises to the nucleus. The protein resides in the cytoplasm. It localises to the golgi apparatus. It is found in the trans-Golgi network. It catalyses the reaction a 1,2-diacyl-sn-glycero-3-phospho-(1D-myo-inositol 4-phosphate) + ATP = a 1,2-diacyl-sn-glycero-3-phospho-(1D-myo-inositol-3,4-bisphosphate) + ADP + H(+). The enzyme catalyses a 1,2-diacyl-sn-glycero-3-phospho-(1D-myo-inositol) + ATP = a 1,2-diacyl-sn-glycero-3-phospho-(1D-myo-inositol-3-phosphate) + ADP + H(+). The catalysed reaction is a 1,2-diacyl-sn-glycero-3-phospho-(1D-myo-inositol-4,5-bisphosphate) + ATP = a 1,2-diacyl-sn-glycero-3-phospho-(1D-myo-inositol-3,4,5-trisphosphate) + ADP + H(+). Only slightly inhibited by wortmannin and LY294002. Activated by clathrin and insulin. Generates phosphatidylinositol 3-phosphate (PtdIns3P) and phosphatidylinositol 3,4-bisphosphate (PtdIns(3,4)P2) that act as second messengers. Has a role in several intracellular trafficking events. Functions in insulin signaling and secretion. Required for translocation of the glucose transporter SLC2A4/GLUT4 to the plasma membrane and glucose uptake in response to insulin-mediated RHOQ activation. Regulates insulin secretion through two different mechanisms: involved in glucose-induced insulin secretion downstream of insulin receptor in a pathway that involves AKT1 activation and TBC1D4/AS160 phosphorylation, and participates in the late step of insulin granule exocytosis probably in insulin granule fusion. Synthesizes PtdIns3P in response to insulin signaling. Functions in clathrin-coated endocytic vesicle formation and distribution. Regulates dynamin-independent endocytosis, probably by recruiting EEA1 to internalizing vesicles. In neurosecretory cells synthesizes PtdIns3P on large dense core vesicles. Participates in calcium induced contraction of vascular smooth muscle by regulating myosin light chain (MLC) phosphorylation through a mechanism involving Rho kinase-dependent phosphorylation of the MLCP-regulatory subunit MYPT1. May play a role in the EGF signaling cascade. May be involved in mitosis and UV-induced damage response. Required for maintenance of normal renal structure and function by supporting normal podocyte function. Involved in the regulation of ciliogenesis and trafficking of ciliary components. This Pongo abelii (Sumatran orangutan) protein is Phosphatidylinositol 4-phosphate 3-kinase C2 domain-containing subunit alpha (PIK3C2A).